We begin with the raw amino-acid sequence, 226 residues long: SPI-1 type 3 secretion system stator protein (226 aa).

The core secretion machinery of the T3SS is composed of approximately 20 different proteins, including cytoplasmic components, a base, an export apparatus and a needle. This subunit is part of the cytosolic complex. Interacts directly with InvC/SctN1 (T3SS-1 ATPase) and SpaO/SctQ (the major sorting platform component).

It localises to the cytoplasm. Its function is as follows. Component of the type III secretion system (T3SS), also called injectisome, which is used to inject bacterial effector proteins into eukaryotic host cells. Acts as a regulator of the InvC/SctN1 ATPase activity. Required for invasion and secretion. This Salmonella typhimurium (strain SL1344) protein is SPI-1 type 3 secretion system stator protein.